The sequence spans 144 residues: Large ribosomal subunit protein uL14 (144 aa).

Belongs to the universal ribosomal protein uL14 family. In terms of assembly, part of the 50S ribosomal subunit. Forms a cluster with proteins L3 and L24e, part of which may contact the 16S rRNA in 2 intersubunit bridges.

Functionally, binds to 23S rRNA. Forms part of two intersubunit bridges in the 70S ribosome. The sequence is that of Large ribosomal subunit protein uL14 from Cenarchaeum symbiosum (strain A).